A 30-amino-acid chain; its full sequence is Dermaseptin-3.1TR (30 aa).

Expressed by the skin glands.

It is found in the secreted. In terms of biological role, has antimicrobial activity. The polypeptide is Dermaseptin-3.1TR (Phyllomedusa trinitatis (Trinidad leaf frog)).